The chain runs to 334 residues: Ornithine carbamoyltransferase (334 aa).

Residues 57 to 60, glutamine 84, arginine 108, and 135 to 138 contribute to the carbamoyl phosphate site; these read STRT and HPTQ. L-ornithine-binding positions include asparagine 169, aspartate 233, and 237–238; that span reads SM. Residues 275–276 and arginine 320 each bind carbamoyl phosphate; that span reads CL.

The protein belongs to the aspartate/ornithine carbamoyltransferase superfamily. OTCase family. Homotrimer.

The protein localises to the cytoplasm. The enzyme catalyses carbamoyl phosphate + L-ornithine = L-citrulline + phosphate + H(+). The protein operates within amino-acid biosynthesis; L-arginine biosynthesis; L-arginine from L-ornithine and carbamoyl phosphate: step 1/3. Reversibly catalyzes the transfer of the carbamoyl group from carbamoyl phosphate (CP) to the N(epsilon) atom of ornithine (ORN) to produce L-citrulline. The sequence is that of Ornithine carbamoyltransferase from Vibrio vulnificus (strain CMCP6).